The following is a 210-amino-acid chain: Large ribosomal subunit protein bL9 (210 aa).

The disordered stretch occupies residues 172–210 (EAAAAALEPDSEEEFEAATPPSELAAEASDEDADDAKEA). Over residues 199–210 (ASDEDADDAKEA) the composition is skewed to acidic residues.

This sequence belongs to the bacterial ribosomal protein bL9 family.

Its function is as follows. Binds to the 23S rRNA. The chain is Large ribosomal subunit protein bL9 from Sphingopyxis alaskensis (strain DSM 13593 / LMG 18877 / RB2256) (Sphingomonas alaskensis).